The chain runs to 106 residues: Prothymosin alpha-B (106 aa).

Basic and acidic residues predominate over residues 1–39 (MADAKVDSATEISAKDLKEKKLIEEKENGKDATNGKENE). Residues 1–106 (MADAKVDSAT…DVDPKKQKVN (106 aa)) form a disordered region. Ser-8 carries the phosphoserine modification. A Phosphothreonine modification is found at Thr-10. 2 stretches are compositionally biased toward acidic residues: residues 40–76 (ENGEPEIDDEDDDEVDEDDEEGEGDEDEDEDDDDEDL) and 85–98 (DDDEDEDEDDEDDV).

Belongs to the pro/parathymosin family. As to expression, uniformly expressed in all embryonic cells at 4 and 8 hpf. At the 20-somite stage (18 hpf), ubiquitously expressed in the developing nervous system, in the tail bud and in the pronephric ducts. Also expressed in some placodes, including the anterior lateral line placode, otic vesicle and olfactory placode. At 27 hpf, strong expression persists in the central nervous system and the olfactory placode. Expressed strongly in the eyes and the pectoral fin buds. In the tail region, expressed in the spinal cord, in the posterior lateral line precursors, and persists in the pronephric ducts. At 48 hpf, expressed in all head territories including the developing brain, eyes, and pharyngeal arches. More caudally, expression persists in the pectoral fin buds, the spinal cord and, for the first time, appears in the intestine. At 72 hpf, expressed only in restricted regions of the brain, in pharyngeal arches region and in the amacrine cells and the horizontal cells of the retina.

The protein resides in the nucleus. The polypeptide is Prothymosin alpha-B (Danio rerio (Zebrafish)).